Consider the following 201-residue polypeptide: Probable nicotinate-nucleotide adenylyltransferase (201 aa).

Belongs to the NadD family.

The catalysed reaction is nicotinate beta-D-ribonucleotide + ATP + H(+) = deamido-NAD(+) + diphosphate. Its pathway is cofactor biosynthesis; NAD(+) biosynthesis; deamido-NAD(+) from nicotinate D-ribonucleotide: step 1/1. In terms of biological role, catalyzes the reversible adenylation of nicotinate mononucleotide (NaMN) to nicotinic acid adenine dinucleotide (NaAD). This Bacteroides fragilis (strain YCH46) protein is Probable nicotinate-nucleotide adenylyltransferase.